The chain runs to 291 residues: Elongation factor Ts (291 aa).

Positions 84–87 (TDFV) are involved in Mg(2+) ion dislocation from EF-Tu.

It belongs to the EF-Ts family.

Its subcellular location is the cytoplasm. In terms of biological role, associates with the EF-Tu.GDP complex and induces the exchange of GDP to GTP. It remains bound to the aminoacyl-tRNA.EF-Tu.GTP complex up to the GTP hydrolysis stage on the ribosome. This chain is Elongation factor Ts, found in Bifidobacterium adolescentis (strain ATCC 15703 / DSM 20083 / NCTC 11814 / E194a).